A 557-amino-acid chain; its full sequence is MKSLLFGTPCSCAIFILVYCIITLFIWFLYTDNLSNAIVDFEYFSIKNLGELGKEAHLQMTETDLVDAQLQNEKYQYNAWLSERIPLKRTLEDYRDPQCLKINYSSEKTVTVSIVIAIQQEHPHTLLRGIYSVITQTSPYLLKEIVLVHDGHPDLDLIRHIHHKLPIVIQLEMESSKGIIHARLTGAGVATGDILVFLNGHMEVTRGWLPPLLEPILLNNQTVTEPIVDAISRESFAYRKLVEPEQLAFDWQLDHIFLPLDQHSWNSLPKPYPSSQLEGRVFAIDRKWFWHLGGWDEGLRDYGGDALELSLKVWQCGGLILAVPCSRVGIIYKRDELEAQMAPNRNPSLQVQKNFKRVVDVWLDEYKLHFYRYNPKLRNLTAESLDKPRDLRRRLNCKSFEWYRSQVAPQIRNHFLHAGLTNYPIGKIMPFVAPHFCLSIKGGFPVIRKCHSTNFEDWTLTSRCQLKHGNMCLDVDYKNNVRATKCTKKLSKNPWHYNYQHSSFVSNGNKCLQIDVNKVGLILSACDSDVTEQRWMFTKVQDFKLDHMRDICLSVNH.

Residues 1–4 (MKSL) lie on the Cytoplasmic side of the membrane. The helical; Signal-anchor for type II membrane protein transmembrane segment at 5–27 (LFGTPCSCAIFILVYCIITLFIW) threads the bilayer. Topologically, residues 28–557 (FLYTDNLSNA…MRDICLSVNH (530 aa)) are lumenal. N-linked (GlcNAc...) asparagine glycosylation is found at asparagine 33 and asparagine 103. Cystine bridges form between cysteine 99/cysteine 325, cysteine 316/cysteine 397, cysteine 437/cysteine 450, cysteine 472/cysteine 486, and cysteine 511/cysteine 526. The tract at residues 109–215 (TVTVSIVIAI…RGWLPPLLEP (107 aa)) is catalytic subdomain A. Residue asparagine 220 is glycosylated (N-linked (GlcNAc...) asparagine). The interval 271–333 (PYPSSQLEGR…PCSRVGIIYK (63 aa)) is catalytic subdomain B. Residue asparagine 379 is glycosylated (N-linked (GlcNAc...) asparagine). In terms of domain architecture, Ricin B-type lectin spans 456-557 (EDWTLTSRCQ…MRDICLSVNH (102 aa)).

The protein belongs to the glycosyltransferase 2 family. GalNAc-T subfamily.

It is found in the golgi apparatus membrane. In terms of biological role, probable inactive glycosyltransferase. The polypeptide is Putative inactive polypeptide N-acetylgalactosaminyltransferase 11 (Drosophila melanogaster (Fruit fly)).